The sequence spans 1255 residues: Bifunctional autolysin (1255 aa).

A signal peptide spans 1 to 36 (MLGVINRMAKKFNYKLPSMVALTLVGSAVTAHQVQA). Disordered stretches follow at residues 110-141 (GDTR…NTNV) and 193-218 (VTTF…KYKP). The N-acetylmuramoyl-L-alanine amidase stretch occupies residues 199 to 775 (SAQPRSVAAT…VAQPKTAVKA (577 aa)). GW domains lie at 442–516 (TVAA…YNTA), 518–592 (SPVN…DTAK), 611–685 (TVSS…YNNA), 687–761 (SPVN…VPAA), 783–858 (TTQT…VQNL), 860–935 (KEVK…APTA), and 942–1016 (AAKD…KELI). Residues 776–1255 (YTVTKPQTTQ…GKYFDIPQYK (480 aa)) form an endo-beta-N-acetylglucosaminidase region.

This sequence in the N-terminal section; belongs to the N-acetylmuramoyl-L-alanine amidase 2 family. The protein in the C-terminal section; belongs to the glycosyl hydrolase 73 family. In terms of assembly, oligomer; forms a ring structure at the cell surface which is important for efficient partitioning of daughter cells after cell division. In terms of processing, undergoes proteolytic processing to generate the two extracellular lytic enzymes, probably at the septal region on the cell surface.

The protein localises to the secreted. The catalysed reaction is Hydrolyzes the link between N-acetylmuramoyl residues and L-amino acid residues in certain cell-wall glycopeptides.. The enzyme catalyses an N(4)-(oligosaccharide-(1-&gt;3)-[oligosaccharide-(1-&gt;6)]-beta-D-Man-(1-&gt;4)-beta-D-GlcNAc-(1-&gt;4)-alpha-D-GlcNAc)-L-asparaginyl-[protein] + H2O = an oligosaccharide-(1-&gt;3)-[oligosaccharide-(1-&gt;6)]-beta-D-Man-(1-&gt;4)-D-GlcNAc + N(4)-(N-acetyl-beta-D-glucosaminyl)-L-asparaginyl-[protein]. In terms of biological role, endohydrolysis of the di-N-acetylchitobiosyl unit in high-mannose glycopeptides and glycoproteins containing the -[(Man)5(GlcNAc)2]-Asn structure. One N-acetyl-D-glucosamine residue remains attached to the protein; the rest of the oligosaccharide is released intact. Cleaves the peptidoglycan connecting the daughter cells at the end of the cell division cycle, resulting in the separation of the two newly divided cells. Acts as an autolysin in penicillin-induced lysis. The protein is Bifunctional autolysin (atl) of Staphylococcus aureus (strain Mu3 / ATCC 700698).